The following is a 164-amino-acid chain: Anterior gradient protein 2-B (164 aa).

The signal sequence occupies residues 1–20 (MESVLKSLFVLLVATSFTLA). Short sequence motifs (homodimer stabilization; interchain) lie at residues 34-43 (SRGWGDNLEW) and 49-56 (EGLYKAKA).

This sequence belongs to the AGR family. In terms of assembly, monomer and homodimer.

The protein resides in the secreted. The protein localises to the endoplasmic reticulum. This is Anterior gradient protein 2-B (agr2-b) from Xenopus laevis (African clawed frog).